The chain runs to 935 residues: Coiled-coil domain-containing protein 66 (935 aa).

Polar residues predominate over residues 76-96 (LDTSQAKPENSRLTFSPSTDK). The segment at 76 to 103 (LDTSQAKPENSRLTFSPSTDKQYSEKDS) is disordered. Thr-114 bears the Phosphothreonine mark. Ser-366 carries the phosphoserine modification. The stretch at 462–555 (LEHQKAIMAQ…EQRIRELAQK (94 aa)) forms a coiled coil. 3 disordered regions span residues 470–491 (AQVEENRRKKRLEEEQRKKEEQ), 577–602 (TISSSHSDPEETADTSTASPKKDTGV), and 738–794 (ENLS…RTQQ). Positions 473–491 (EENRRKKRLEEEQRKKEEQ) are enriched in basic and acidic residues. The interval 567–935 (GAQVDYKAFT…NQEDNFSSSF (369 aa)) is mediates localization to cilia, centrosomes and spindle microtubules and the interaction with PCM1, CEP290, CEP104 and CSPP1. Polar residues predominate over residues 590–602 (DTSTASPKKDTGV). Ser-595 is subject to Phosphoserine. Residues 752 to 782 (SHRETESESRLHLIKKVEEPLKTPSVSKERF) are compositionally biased toward basic and acidic residues. Residues 783–794 (QTSPAVKNRTQQ) show a composition bias toward polar residues.

As to quaternary structure, homodimer; disulfide-linked. Interacts with CEP290. Interacts with PCM1. Interacts with ARMC9, TOGARAM1, CSPP1 and CEP104. Interacts with CDK5RAP2, CEP152, CEP192, TBG1 and PRC1. Widely expressed. Expressed in retina by rod photoreceptors but also detected in outer plexiform and ganglion cell layers (at protein level).

The protein resides in the cytoplasm. It is found in the cytoskeleton. Its subcellular location is the microtubule organizing center. The protein localises to the centrosome. It localises to the centriolar satellite. The protein resides in the cell projection. It is found in the cilium. Its subcellular location is the cilium basal body. The protein localises to the cilium axoneme. It localises to the photoreceptor inner segment. The protein resides in the photoreceptor outer segment. Functionally, microtubule-binding protein required for ciliogenesis. May function in ciliogenesis by mediating the transport of proteins like BBS4 to the cilium, but also through the organization of the centriolar satellites. Required for the assembly of signaling-competent cilia with proper structure and length. Mediates this function in part by regulating transition zone assembly and basal body recruitment of the IFT-B complex. Cooperates with the ciliopathy proteins CSPP1 and CEP104 during cilium length regulation. Plays two important roles during cell division. First, is required for mitotic progression via regulation of spindle assembly, organization and orientation, levels of spindle microtubules (MTs), kinetochore-fiber integrity, and chromosome alignment. Second, functions during cytokinesis in part by regulating assembly and organization of central spindle and midbody MTs. Plays a role in retina morphogenesis and/or homeostasis. This chain is Coiled-coil domain-containing protein 66, found in Mus musculus (Mouse).